A 336-amino-acid polypeptide reads, in one-letter code: Glycerol-3-phosphate dehydrogenase [NAD(P)+] (336 aa).

Positions 11, 12, 32, and 106 each coordinate NADPH. The sn-glycerol 3-phosphate site is built by Lys-106 and Gly-136. Ala-140 is a binding site for NADPH. Residues Lys-191, Asp-244, Ser-254, Arg-255, and Asn-256 each contribute to the sn-glycerol 3-phosphate site. The active-site Proton acceptor is the Lys-191. Residue Arg-255 coordinates NADPH. 2 residues coordinate NADPH: Val-279 and Glu-281.

This sequence belongs to the NAD-dependent glycerol-3-phosphate dehydrogenase family.

The protein localises to the cytoplasm. It carries out the reaction sn-glycerol 3-phosphate + NAD(+) = dihydroxyacetone phosphate + NADH + H(+). It catalyses the reaction sn-glycerol 3-phosphate + NADP(+) = dihydroxyacetone phosphate + NADPH + H(+). It participates in membrane lipid metabolism; glycerophospholipid metabolism. In terms of biological role, catalyzes the reduction of the glycolytic intermediate dihydroxyacetone phosphate (DHAP) to sn-glycerol 3-phosphate (G3P), the key precursor for phospholipid synthesis. The protein is Glycerol-3-phosphate dehydrogenase [NAD(P)+] of Frankia casuarinae (strain DSM 45818 / CECT 9043 / HFP020203 / CcI3).